The sequence spans 218 residues: dTTP/UTP pyrophosphatase (218 aa).

Residues 1–10 are compositionally biased toward polar residues; it reads MTASPSSAEG. The interval 1–20 is disordered; that stretch reads MTASPSSAEGSSGLPDRPKL. The active-site Proton acceptor is the aspartate 87.

It belongs to the Maf family. YhdE subfamily. A divalent metal cation is required as a cofactor.

Its subcellular location is the cytoplasm. It catalyses the reaction dTTP + H2O = dTMP + diphosphate + H(+). It carries out the reaction UTP + H2O = UMP + diphosphate + H(+). Its function is as follows. Nucleoside triphosphate pyrophosphatase that hydrolyzes dTTP and UTP. May have a dual role in cell division arrest and in preventing the incorporation of modified nucleotides into cellular nucleic acids. The polypeptide is dTTP/UTP pyrophosphatase (Gluconobacter oxydans (strain 621H) (Gluconobacter suboxydans)).